We begin with the raw amino-acid sequence, 175 residues long: NADH-ubiquinone oxidoreductase chain 6 (175 aa).

Helical transmembrane passes span 1–21 (MMTY…VGFS), 25–45 (SPIY…GIVL), 48–68 (GGSF…LVVF), 88–108 (TVLS…GYCI), and 149–169 (YGTW…LVVM).

It belongs to the complex I subunit 6 family. As to quaternary structure, core subunit of respiratory chain NADH dehydrogenase (Complex I) which is composed of 45 different subunits.

Its subcellular location is the mitochondrion inner membrane. The catalysed reaction is a ubiquinone + NADH + 5 H(+)(in) = a ubiquinol + NAD(+) + 4 H(+)(out). Its function is as follows. Core subunit of the mitochondrial membrane respiratory chain NADH dehydrogenase (Complex I) which catalyzes electron transfer from NADH through the respiratory chain, using ubiquinone as an electron acceptor. Essential for the catalytic activity and assembly of complex I. The polypeptide is NADH-ubiquinone oxidoreductase chain 6 (MT-ND6) (Urotrichus talpoides (Japanese shrew mole)).